The chain runs to 338 residues: Lipopolysaccharide 1,2-glucosyltransferase (338 aa).

UDP is bound by residues 33–38 (GVDANY) and 130–131 (DA). Asp130 and Asp132 together coordinate Mg(2+). 2 consecutive short sequence motifs (DXD) follow at residues 130 to 132 (DAD) and 215 to 217 (DQD). Position 264 (His264) interacts with Mg(2+). Residue 264–270 (HYTGATK) coordinates UDP.

The protein belongs to the glycosyltransferase 8 family. Mg(2+) is required as a cofactor.

It localises to the cell inner membrane. It carries out the reaction UDP-glucose + [lipopolysaccharide] = UDP + D-glucosyl-[lipopolysaccharide].. It catalyses the reaction alpha-D-Glc-(1-&gt;3)-[alpha-D-Gal-(1-&gt;6)]-alpha-D-Glc-(1-&gt;3)-[L-alpha-D-Hep-(1-&gt;7)]-4-O-PO3(2-)-L-alpha-D-Hep-(1-&gt;3)-4-O-PO3(2-)-L-alpha-D-Hep-(1-&gt;5)-[alpha-Kdo-(2-&gt;4)]-alpha-Kdo-(2-&gt;6)-lipid A + UDP-alpha-D-glucose = alpha-D-Glc-(1-&gt;2)-alpha-D-Glc-(1-&gt;3)-[alpha-D-Gal-(1-&gt;6)]-alpha-D-Glc-(1-&gt;3)-[L-alpha-D-Hep-(1-&gt;7)]-4-O-PO3(2-)-L-alpha-D-Hep-(1-&gt;3)-4-O-PO3(2-)-L-alpha-D-Hep-(1-&gt;5)-[alpha-Kdo-(2-&gt;4)]-alpha-Kdo-(2-&gt;6)-lipid A + UDP + H(+). It functions in the pathway bacterial outer membrane biogenesis; LPS core biosynthesis. In terms of biological role, glucosyltransferase involved in the biosynthesis of the core oligosaccharide region of lipopolysaccharide (LPS). Catalyzes the addition of a glucose (glucose III) to the outer-core glucose II. This Escherichia coli (strain K12) protein is Lipopolysaccharide 1,2-glucosyltransferase.